A 361-amino-acid chain; its full sequence is DNA replication and repair protein RecF (361 aa).

30-37 (GPNGSGKT) lines the ATP pocket.

Belongs to the RecF family.

Its subcellular location is the cytoplasm. Its function is as follows. The RecF protein is involved in DNA metabolism; it is required for DNA replication and normal SOS inducibility. RecF binds preferentially to single-stranded, linear DNA. It also seems to bind ATP. The polypeptide is DNA replication and repair protein RecF (Yersinia enterocolitica serotype O:8 / biotype 1B (strain NCTC 13174 / 8081)).